A 195-amino-acid polypeptide reads, in one-letter code: Obelin (195 aa).

Residues 1 to 6 (MSSKYA) constitute a propeptide that is removed on maturation. EF-hand domains are found at residues 17–52 (RWIK…DICA), 53–88 (KLEA…FPQF), 110–145 (LIRE…SGIS), and 146–181 (PSQE…FWYT). Residues Asp30, Asn32, Asn34, Lys36, and Glu41 each contribute to the Ca(2+) site. Ca(2+) is bound by residues Asp123, Asp125, Ser127, Thr129, Glu134, Asp159, Asp161, Ser163, Asp165, and Glu170.

This sequence belongs to the aequorin family.

Functionally, ca(2+)-dependent bioluminescence photoprotein. Displays an emission peak at 470 nm (blue light). Trace amounts of calcium ion trigger the intramolecular oxidation of the chromophore, coelenterazine into coelenteramide and CO(2) with the concomitant emission of light. The protein is Obelin of Obelia longissima (Black sea hydrozoan).